Reading from the N-terminus, the 211-residue chain is FMN-dependent NADH:quinone oxidoreductase (211 aa).

Residues S10, 16–18, and 138–141 each bind FMN; these read STS and TQGG.

Belongs to the azoreductase type 1 family. In terms of assembly, homodimer. FMN serves as cofactor.

It carries out the reaction 2 a quinone + NADH + H(+) = 2 a 1,4-benzosemiquinone + NAD(+). It catalyses the reaction N,N-dimethyl-1,4-phenylenediamine + anthranilate + 2 NAD(+) = 2-(4-dimethylaminophenyl)diazenylbenzoate + 2 NADH + 2 H(+). Functionally, quinone reductase that provides resistance to thiol-specific stress caused by electrophilic quinones. Its function is as follows. Also exhibits azoreductase activity. Catalyzes the reductive cleavage of the azo bond in aromatic azo compounds to the corresponding amines. In Frankia alni (strain DSM 45986 / CECT 9034 / ACN14a), this protein is FMN-dependent NADH:quinone oxidoreductase.